The primary structure comprises 631 residues: Eukaryotic translation initiation factor 2-alpha kinase 1 (631 aa).

The segment at 1–34 (MQGGNSGVRKREEEGGGEGAVAAPPAIDFPAESS) is disordered. An SIFI-degron motif is present at residues 85–104 (LRSRQVFKLLCQTFIKMGLL). The Protein kinase domain occupies 167-583 (FEEVAILGKG…AVQLLQSELF (417 aa)). Residues 173–181 (LGKGGYGRV) and Lys196 contribute to the ATP site. The tract at residues 260 to 301 (QEEDREQYDVKNDESSSSSIVFAEPTPEKGKRFGESDTENQN) is disordered. Phosphothreonine is present on Thr285. The segment covering 285–301 (TPEKGKRFGESDTENQN) has biased composition (basic and acidic residues). Residues 410-415 (ACPYVM) form an HRM 1 repeat. Catalysis depends on Asp442, which acts as the Proton acceptor. Residues Thr486 and Thr488 each carry the phosphothreonine; by autocatalysis modification. A Phosphothreonine modification is found at Thr493. The stretch at 552–557 (RCPVQA) is one HRM 2 repeat.

The protein belongs to the protein kinase superfamily. Ser/Thr protein kinase family. GCN2 subfamily. In terms of assembly, synthesized in an inactive form that binds to the N-terminal domain of CDC37. Has to be associated with a multiprotein complex containing Hsp90, CDC37 and PPP5C for maturation and activation by autophosphorylation. The phosphatase PPP5C modulates this activation. Homodimer; homodimerizes in presence of heme, forming a disulfide-linked inactive homodimer. Interacts with DELE1; binds both to full-length DELE1 and processed form of DELE1 (S-DELE1) in response to stress, leading to activate its protein kinase activity and trigger the integrated stress response (ISR). Activated by autophosphorylation; phosphorylated predominantly on serine and threonine residues, but also on tyrosine residues. Autophosphorylation at Thr-488 is required for kinase activation. The active autophosphorylated form apparently is largely refractory to cellular heme fluctuations. In terms of processing, ubiquitinated and degraded by the SIFI complex once the mitochondrial stress has been resolved, thereby providing stress response silencing. Within the SIFI complex, UBR4 initiates ubiquitin chain that are further elongated or branched by KCMF1.

Its subcellular location is the cytoplasm. The catalysed reaction is L-seryl-[protein] + ATP = O-phospho-L-seryl-[protein] + ADP + H(+). It carries out the reaction L-threonyl-[protein] + ATP = O-phospho-L-threonyl-[protein] + ADP + H(+). Its activity is regulated as follows. In normal conditions, the protein kinase activity is inhibited; inhibition is relieved by various stress conditions. Inhibited by heme: in presence of heme, forms a disulfide-linked inactive homodimer. Heme depletion relieves inhibition and stimulates kinase activity by autophosphorylation. Inhibited by the heme metabolites biliverdin and bilirubin. Induced by oxidative stress generated by arsenite treatment. Binding of nitric oxide (NO) to the heme iron in the N-terminal heme-binding domain activates the kinase activity, while binding of carbon monoxide (CO) suppresses kinase activity. Protein kinase activity is also activated upon binding to DELE1 in response to various stress, triggering the integrated stress response (ISR): activated by full-length DELE1 in response to iron deficiency, while it is activated by the processed form of DELE1 (S-DELE1) in response to mitochondrial stress. Metabolic-stress sensing protein kinase that phosphorylates the alpha subunit of eukaryotic translation initiation factor 2 (EIF2S1/eIF-2-alpha) in response to various stress conditions. Key activator of the integrated stress response (ISR) required for adaptation to various stress, such as heme deficiency, oxidative stress, osmotic shock, mitochondrial dysfunction and heat shock. EIF2S1/eIF-2-alpha phosphorylation in response to stress converts EIF2S1/eIF-2-alpha in a global protein synthesis inhibitor, leading to a global attenuation of cap-dependent translation, while concomitantly initiating the preferential translation of ISR-specific mRNAs, such as the transcriptional activator ATF4, and hence allowing ATF4-mediated reprogramming. Acts as a key sensor of heme-deficiency: in normal conditions, binds hemin via a cysteine thiolate and histidine nitrogenous coordination, leading to inhibit the protein kinase activity. This binding occurs with moderate affinity, allowing it to sense the heme concentration within the cell: heme depletion relieves inhibition and stimulates kinase activity, activating the ISR. Thanks to this unique heme-sensing capacity, plays a crucial role to shut off protein synthesis during acute heme-deficient conditions. In red blood cells (RBCs), controls hemoglobin synthesis ensuring a coordinated regulation of the synthesis of its heme and globin moieties. It thereby plays an essential protective role for RBC survival in anemias of iron deficiency. Iron deficiency also triggers activation by full-length DELE1. Also activates the ISR in response to mitochondrial dysfunction: HRI/EIF2AK1 protein kinase activity is activated upon binding to the processed form of DELE1 (S-DELE1), thereby promoting the ATF4-mediated reprogramming. Also acts as an activator of mitophagy in response to mitochondrial damage: catalyzes phosphorylation of eIF-2-alpha (EIF2S1) following activation by S-DELE1, thereby promoting mitochondrial localization of EIF2S1, triggering PRKN-independent mitophagy. In Macaca fascicularis (Crab-eating macaque), this protein is Eukaryotic translation initiation factor 2-alpha kinase 1.